The primary structure comprises 110 residues: Insulin (110 aa).

The signal sequence occupies residues 1–24 (MAPWTRLLPLLALLSLWIPAPTRA). Cystine bridges form between Cys-31-Cys-96, Cys-43-Cys-109, and Cys-95-Cys-100. The propeptide at 57–87 (EAEDLQGKDAELGEAPGAGGLQPSALEAPLQ) is c peptide. Positions 60 to 80 (DLQGKDAELGEAPGAGGLQPS) are disordered.

The protein belongs to the insulin family. In terms of assembly, heterodimer of a B chain and an A chain linked by two disulfide bonds.

The protein resides in the secreted. In terms of biological role, insulin decreases blood glucose concentration. It increases cell permeability to monosaccharides, amino acids and fatty acids. It accelerates glycolysis, the pentose phosphate cycle, and glycogen synthesis in liver. The chain is Insulin (INS) from Felis catus (Cat).